Consider the following 686-residue polypeptide: Glycine--tRNA ligase beta subunit (686 aa).

The protein belongs to the class-II aminoacyl-tRNA synthetase family. In terms of assembly, tetramer of two alpha and two beta subunits.

It localises to the cytoplasm. The enzyme catalyses tRNA(Gly) + glycine + ATP = glycyl-tRNA(Gly) + AMP + diphosphate. In Geobacter metallireducens (strain ATCC 53774 / DSM 7210 / GS-15), this protein is Glycine--tRNA ligase beta subunit.